We begin with the raw amino-acid sequence, 99 residues long: Small ribosomal subunit protein eS24 (99 aa).

This sequence belongs to the eukaryotic ribosomal protein eS24 family. May be present in 2 copies per 70S ribosome. Part of the 30S ribosomal subunit, where it binds 16S rRNA at its canonical site at the bse of the body, as well as a possible second 50S binding site near 23S rRNA helix 45.

The sequence is that of Small ribosomal subunit protein eS24 from Pyrococcus furiosus (strain ATCC 43587 / DSM 3638 / JCM 8422 / Vc1).